The primary structure comprises 429 residues: Histidine--tRNA ligase (429 aa).

It belongs to the class-II aminoacyl-tRNA synthetase family. As to quaternary structure, homodimer.

Its subcellular location is the cytoplasm. It carries out the reaction tRNA(His) + L-histidine + ATP = L-histidyl-tRNA(His) + AMP + diphosphate + H(+). The chain is Histidine--tRNA ligase from Prochlorococcus marinus subsp. pastoris (strain CCMP1986 / NIES-2087 / MED4).